The primary structure comprises 125 residues: MKLFVHNFMSSRFLKNVTVGYPLNLVVKQFVEKDIEFDRDNTIVMLDRIQYEALIVAAAAVNQSDRIPREKPEKWDELTDEQLRVFHHLLMNIDVIDGELICPETKTVFPIRDGIPNMLKVDAEK.

In terms of domain architecture, TRM112 spans 2 to 121 (KLFVHNFMSS…RDGIPNMLKV (120 aa)).

This sequence belongs to the TRM112 family.

The protein resides in the nucleus. The protein localises to the nucleoplasm. It localises to the cytoplasm. Its subcellular location is the perinuclear region. Acts as an activator of both RNA and protein methyltransferases. This is Multifunctional methyltransferase subunit TRM112-like protein from Caenorhabditis elegans.